The primary structure comprises 406 residues: Cysteine desulfurase (406 aa).

N6-(pyridoxal phosphate)lysine is present on Lys-226. The active-site Cysteine persulfide intermediate is the Cys-364.

The protein belongs to the class-V pyridoxal-phosphate-dependent aminotransferase family. Csd subfamily. In terms of assembly, homodimer. Interacts with SufE and the SufBCD complex composed of SufB, SufC and SufD. The interaction with SufE is required to mediate the direct transfer of the sulfur atom from the S-sulfanylcysteine. Requires pyridoxal 5'-phosphate as cofactor.

Its subcellular location is the cytoplasm. It carries out the reaction (sulfur carrier)-H + L-cysteine = (sulfur carrier)-SH + L-alanine. The enzyme catalyses L-selenocysteine + AH2 = hydrogenselenide + L-alanine + A + H(+). The protein operates within cofactor biosynthesis; iron-sulfur cluster biosynthesis. Cysteine desulfurases mobilize the sulfur from L-cysteine to yield L-alanine, an essential step in sulfur metabolism for biosynthesis of a variety of sulfur-containing biomolecules. Component of the suf operon, which is activated and required under specific conditions such as oxidative stress and iron limitation. Acts as a potent selenocysteine lyase in vitro, that mobilizes selenium from L-selenocysteine. Selenocysteine lyase activity is however unsure in vivo. In Cronobacter sakazakii (strain ATCC BAA-894) (Enterobacter sakazakii), this protein is Cysteine desulfurase.